The primary structure comprises 63 residues: Alpha-conotoxin-like PuSG1.1 (63 aa).

Positions 1–21 are cleaved as a signal peptide; the sequence is MRCLAFLVVTLLLFTATATTG. The propeptide occupies 22–43; it reads ASNGMNAAASGEAPDSISLAVR. Cystine bridges form between C46–C52 and C47–C60. A lacks the Ser-Xaa-Pro motif that is crucial for potent interaction with nAChR region spans residues 48–50; that stretch reads PDP.

The protein belongs to the conotoxin A superfamily. In terms of tissue distribution, expressed by the salivary gland.

It localises to the secreted. Functionally, alpha-conopeptides-like may act on postsynaptic membranes, they bind to the nicotinic acetylcholine receptors (nAChR) and thus inhibit them. Has possibly a distinct nAChR binding mode from other alpha-conotoxins, due to a different three residue motif (lacks the Ser-Xaa-Pro motif). In Conus pulicarius (Flea-bitten cone), this protein is Alpha-conotoxin-like PuSG1.1.